A 472-amino-acid chain; its full sequence is Excisase A (472 aa).

In terms of domain architecture, Tyr recombinase spans 244–429 (EILSGITKFE…FSLDMRKLAI (186 aa)). Residues arginine 287, lysine 317, arginine 384, and histidine 407 contribute to the active site. Catalysis depends on tyrosine 416, which acts as the O-(3'-phospho-DNA)-tyrosine intermediate.

Belongs to the XisA/XisC recombinase family.

In terms of biological role, essential for DNA excision. Site specific recombinase necessary for the excision of the 11 kb nifD element during heterocyst differentiation. This is Excisase A (xisA) from Nostoc sp. (strain PCC 7120 / SAG 25.82 / UTEX 2576).